The sequence spans 156 residues: Large ribosomal subunit protein uL22 (156 aa).

Belongs to the universal ribosomal protein uL22 family. Part of the 50S ribosomal subunit.

Its function is as follows. This protein binds specifically to 23S rRNA. It makes multiple contacts with different domains of the 23S rRNA in the assembled 50S subunit and ribosome. In terms of biological role, the globular domain of the protein is located near the polypeptide exit tunnel on the outside of the subunit, while an extended beta-hairpin is found that lines the wall of the exit tunnel in the center of the 70S ribosome. In Methanocaldococcus jannaschii (strain ATCC 43067 / DSM 2661 / JAL-1 / JCM 10045 / NBRC 100440) (Methanococcus jannaschii), this protein is Large ribosomal subunit protein uL22.